Consider the following 439-residue polypeptide: ATP-dependent protease ATPase subunit HslU (439 aa).

Residues Ile-17, 59–64 (GVGKTE), Asp-251, Glu-317, and Arg-389 contribute to the ATP site.

This sequence belongs to the ClpX chaperone family. HslU subfamily. A double ring-shaped homohexamer of HslV is capped on each side by a ring-shaped HslU homohexamer. The assembly of the HslU/HslV complex is dependent on binding of ATP.

The protein localises to the cytoplasm. ATPase subunit of a proteasome-like degradation complex; this subunit has chaperone activity. The binding of ATP and its subsequent hydrolysis by HslU are essential for unfolding of protein substrates subsequently hydrolyzed by HslV. HslU recognizes the N-terminal part of its protein substrates and unfolds these before they are guided to HslV for hydrolysis. The sequence is that of ATP-dependent protease ATPase subunit HslU from Campylobacter jejuni subsp. jejuni serotype O:6 (strain 81116 / NCTC 11828).